The following is a 94-amino-acid chain: Putative pterin-4-alpha-carbinolamine dehydratase (94 aa).

This sequence belongs to the pterin-4-alpha-carbinolamine dehydratase family.

The enzyme catalyses (4aS,6R)-4a-hydroxy-L-erythro-5,6,7,8-tetrahydrobiopterin = (6R)-L-erythro-6,7-dihydrobiopterin + H2O. In Mycobacterium leprae (strain Br4923), this protein is Putative pterin-4-alpha-carbinolamine dehydratase.